Reading from the N-terminus, the 143-residue chain is Large ribosomal subunit protein mL51 (143 aa).

The N-terminal 52 residues, 1 to 52 (MAALVRGLMRRVAALPQAVRSVSGGGQRHEPYRPLPITSPLAGLPRNFRVRE), are a transit peptide targeting the mitochondrion.

Belongs to the mitochondrion-specific ribosomal protein mL51 family. As to quaternary structure, component of the mitochondrial ribosome large subunit (39S) which comprises a 16S rRNA and about 50 distinct proteins.

It is found in the mitochondrion. The chain is Large ribosomal subunit protein mL51 (MRPL51) from Gallus gallus (Chicken).